The primary structure comprises 214 residues: Pyridoxine/pyridoxamine 5'-phosphate oxidase (214 aa).

Substrate contacts are provided by residues 9-12 and Lys67; that span reads RKDY. FMN-binding positions include 62 to 67, 77 to 78, Arg83, Lys84, and Gln106; these read RMVLLK and FT. Positions 124, 128, and 132 each coordinate substrate. Residues 141–142 and Trp186 contribute to the FMN site; that span reads QS. Residue 192-194 participates in substrate binding; that stretch reads RLH. Arg196 contacts FMN.

This sequence belongs to the pyridoxamine 5'-phosphate oxidase family. As to quaternary structure, homodimer. It depends on FMN as a cofactor.

The catalysed reaction is pyridoxamine 5'-phosphate + O2 + H2O = pyridoxal 5'-phosphate + H2O2 + NH4(+). It catalyses the reaction pyridoxine 5'-phosphate + O2 = pyridoxal 5'-phosphate + H2O2. It functions in the pathway cofactor metabolism; pyridoxal 5'-phosphate salvage; pyridoxal 5'-phosphate from pyridoxamine 5'-phosphate: step 1/1. Its pathway is cofactor metabolism; pyridoxal 5'-phosphate salvage; pyridoxal 5'-phosphate from pyridoxine 5'-phosphate: step 1/1. Its function is as follows. Catalyzes the oxidation of either pyridoxine 5'-phosphate (PNP) or pyridoxamine 5'-phosphate (PMP) into pyridoxal 5'-phosphate (PLP). This chain is Pyridoxine/pyridoxamine 5'-phosphate oxidase, found in Nostoc sp. (strain PCC 7120 / SAG 25.82 / UTEX 2576).